A 90-amino-acid chain; its full sequence is Protein RALF-like 29 (90 aa).

The N-terminal stretch at 1 to 25 is a signal peptide; it reads MIKTKEVTFVTILIVLCVFISTIHA. 2 cysteine pairs are disulfide-bonded: Cys-41–Cys-50 and Cys-63–Cys-69.

It belongs to the plant rapid alkalinization factor (RALF) family.

It is found in the secreted. Cell signaling peptide that may regulate plant stress, growth, and development. Mediates a rapid alkalinization of extracellular space by mediating a transient increase in the cytoplasmic Ca(2+) concentration leading to a calcium-dependent signaling events through a cell surface receptor and a concomitant activation of some intracellular mitogen-activated protein kinases. This is Protein RALF-like 29 (RALFL29) from Arabidopsis thaliana (Mouse-ear cress).